The sequence spans 853 residues: Leucine--tRNA ligase (853 aa).

The short motif at 40-50 (PYPSGKMHMGH) is the 'HIGH' region element. The 'KMSKS' region motif lies at 609–613 (KMSKS). K612 is an ATP binding site.

This sequence belongs to the class-I aminoacyl-tRNA synthetase family.

It localises to the cytoplasm. It catalyses the reaction tRNA(Leu) + L-leucine + ATP = L-leucyl-tRNA(Leu) + AMP + diphosphate. This chain is Leucine--tRNA ligase, found in Brachyspira hyodysenteriae (strain ATCC 49526 / WA1).